The sequence spans 304 residues: Acetylxylan esterase A (304 aa).

The N-terminal stretch at 1-24 (MLLSTHLLFVITTLVTSLLHPIDG) is a signal peptide. Catalysis depends on S148, which acts as the Charge relay system. N190 carries an N-linked (GlcNAc...) asparagine glycan.

This sequence belongs to the carbohydrate esterase 1 (CE1) family. AxeA subfamily. In terms of assembly, monomer.

The protein localises to the secreted. It catalyses the reaction Deacetylation of xylans and xylo-oligosaccharides.. It functions in the pathway glycan degradation; xylan degradation. With respect to regulation, inactivated by di-isopropylfluorophosphate and phenylmethylsulfonylfluorid (PMSF), a specific inhibitor of serine esterases. Functionally, acetylxylan esterase involved in the hydrolysis of xylan, a major structural heterogeneous polysaccharide found in plant biomass representing the second most abundant polysaccharide in the biosphere, after cellulose. Degrades acetylated xylans by cleaving acetyl side groups from the hetero-xylan backbone. This chain is Acetylxylan esterase A (axeA), found in Aspergillus awamori (Black koji mold).